The primary structure comprises 395 residues: Type III polyketide synthase A (395 aa).

63–70 contacts CoA; that stretch reads KLEHLCKT. The Nucleophile role is filled by C172. 224–225 is a binding site for substrate; that stretch reads GD. CoA-binding positions include L274, 314-317, and A317; that span reads GGPA.

The protein belongs to the thiolase-like superfamily. Chalcone/stilbene synthases family. As to quaternary structure, homodimer. Interacts with 4CLL1/ACOS5 and TKPR1. Expressed in flowers and flower buds (at protein level), and, at very low levels, in roots, seedlings, leaves and stems. Mostly confined to anther tapetal cells.

It is found in the endoplasmic reticulum. It functions in the pathway secondary metabolite biosynthesis; flavonoid biosynthesis. Its function is as follows. Plant type III polyketide synthases (PKSs) that catalyzes the condensation of malonyl-CoA units with various CoA ester starter molecules to generate a diverse array of natural products including long-chain alkyl alpha-pyrones. Accepts up to C(20) chain-length fatty acyl CoAs as starter substrates, and carries out sequential condensations with malonyl-CoA to produce triketide and tetraketide alpha-pyrones, potential sporopollenin precursors. Favorite substrates for are midchain- and v-hydroxylated fatty acyl-CoAs (e.g. 12-hydroxyoctadecanoyl-CoA and 16-hydroxyhexadecanoyl-CoA). Required for pollen development and sporopollenin biosynthesis, the major constituent of exine in the outer pollen wall. In vitro, can use 4-coumaroyl-coenzyme A as substrate to produce bis-noryangonin and fatty acyl-coenzyme A as substrate to produce medium-chain alkyl pyrones. May play a role in both the synthesis of pollen fatty acids and phenolics found in exine. This is Type III polyketide synthase A from Arabidopsis thaliana (Mouse-ear cress).